A 581-amino-acid polypeptide reads, in one-letter code: Adenine deaminase (581 aa).

Belongs to the metallo-dependent hydrolases superfamily. Adenine deaminase family. Mn(2+) is required as a cofactor.

It carries out the reaction adenine + H2O + H(+) = hypoxanthine + NH4(+). The sequence is that of Adenine deaminase from Brucella abortus (strain 2308).